Here is a 158-residue protein sequence, read N- to C-terminus: Large ribosomal subunit protein uL15 (158 aa).

Belongs to the universal ribosomal protein uL15 family. As to quaternary structure, part of the 50S ribosomal subunit.

Binds to the 23S rRNA. The protein is Large ribosomal subunit protein uL15 of Aeropyrum pernix (strain ATCC 700893 / DSM 11879 / JCM 9820 / NBRC 100138 / K1).